The primary structure comprises 214 residues: Probable transaldolase (214 aa).

Residue lysine 83 is the Schiff-base intermediate with substrate of the active site.

It belongs to the transaldolase family. Type 3B subfamily.

Its subcellular location is the cytoplasm. It carries out the reaction D-sedoheptulose 7-phosphate + D-glyceraldehyde 3-phosphate = D-erythrose 4-phosphate + beta-D-fructose 6-phosphate. It functions in the pathway carbohydrate degradation; pentose phosphate pathway; D-glyceraldehyde 3-phosphate and beta-D-fructose 6-phosphate from D-ribose 5-phosphate and D-xylulose 5-phosphate (non-oxidative stage): step 2/3. Functionally, transaldolase is important for the balance of metabolites in the pentose-phosphate pathway. This Streptococcus equi subsp. equi (strain 4047) protein is Probable transaldolase.